The following is a 511-amino-acid chain: Cytochrome P450 monooxygenase PUL2 (511 aa).

A helical transmembrane segment spans residues 14–34 (WMAFVYFTPVLFVVLYLLKEW). N-linked (GlcNAc...) asparagine glycans are attached at residues asparagine 116, asparagine 141, and asparagine 442. Residue cysteine 462 coordinates heme.

Belongs to the cytochrome P450 family. Heme is required as a cofactor.

It localises to the membrane. It functions in the pathway siderophore biosynthesis. Functionally, cytochrome P450 monooxygenase; part of the PUL gene cluster that mediates the formation of pulcherrimin, a red iron-containing pigment composed of two cyclized and modified leucine molecules that acts as a siderophore, a chelator that binds iron outside the cell for subsequent uptake. Two leucine molecules are cyclized via a cyclodipeptide synthase, and the resulting diketopiperazine is oxidized by a cytochrome P450 monooxygenase to generate pulcherriminic acid (PA), which can then spontaneously bind iron to form pulcherrimin. The probable cyclodipeptide synthase PUL1 and the cytochrome P450 monooxygenase PUL2 encode the enzymes responsible for the two-step pulcherrimin biosynthesis pathway. This chain is Cytochrome P450 monooxygenase PUL2, found in Kluyveromyces lactis (strain ATCC 8585 / CBS 2359 / DSM 70799 / NBRC 1267 / NRRL Y-1140 / WM37) (Yeast).